The primary structure comprises 291 residues: uncharacterized protein (291 aa).

Residues 5 to 196 (GVFSGGGVKG…LSNFPIWLFS (192 aa)) enclose the PNPLA domain. A GXGXXG motif is present at residues 9 to 14 (GGGVKG). A helical transmembrane segment spans residues 34–50 (VAGTSAGAIIAAFIASG). The GXSXG motif lies at 36 to 40 (GTSAG). The active-site Nucleophile is the Ser-38. Residue Asp-183 is the Proton acceptor of the active site. Positions 183–185 (DGG) match the DGA/G motif.

Its subcellular location is the cell membrane. In terms of biological role, probable lipid hydrolase. This is an uncharacterized protein from Bacillus subtilis (strain 168).